Consider the following 664-residue polypeptide: Intraflagellar transport protein 70A (664 aa).

7 TPR repeats span residues 11 to 44 (DGEF…SPRS), 45 to 78 (RAGL…HPEL), 153 to 186 (LDGQ…SGYR), 188 to 220 (DLSY…GIRQ), 392 to 423 (LTKQ…EKYI), 424 to 456 (PVLM…CNDH), and 458 to 491 (VWKL…HYDN). A coiled-coil region spans residues 507–534 (YIMTSQNEEAEELMRKIEKEEEQLSYDD). The stretch at 543 to 576 (CIVNLVIGTLYCAKGNYDFGISRVIKSLEPYNKK) is one TPR 8 repeat.

The protein belongs to the TTC30/dfy-1/fleer family.

It is found in the cell projection. The protein localises to the cilium. Its function is as follows. Required for polyglutamylation of axonemal tubulin. Plays a role in anterograde intraflagellar transport (IFT), the process by which cilia precursors are transported from the base of the cilium to the site of their incorporation at the tip. This chain is Intraflagellar transport protein 70A (IFT70A), found in Bos taurus (Bovine).